Reading from the N-terminus, the 237-residue chain is Uridylate kinase (237 aa).

9 to 12 (KFSG) serves as a coordination point for ATP. An involved in allosteric activation by GTP region spans residues 17–22 (GEAGYG). G51 contacts UMP. G52 and R56 together coordinate ATP. UMP contacts are provided by residues D72 and 133-140 (TGNPFFTT). 3 residues coordinate ATP: T160, Y166, and D169.

Belongs to the UMP kinase family. In terms of assembly, homohexamer.

It is found in the cytoplasm. It catalyses the reaction UMP + ATP = UDP + ADP. Its pathway is pyrimidine metabolism; CTP biosynthesis via de novo pathway; UDP from UMP (UMPK route): step 1/1. Allosterically activated by GTP. Inhibited by UTP. Catalyzes the reversible phosphorylation of UMP to UDP. The chain is Uridylate kinase from Sulfurimonas denitrificans (strain ATCC 33889 / DSM 1251) (Thiomicrospira denitrificans (strain ATCC 33889 / DSM 1251)).